Reading from the N-terminus, the 498-residue chain is 3-octaprenyl-4-hydroxybenzoate carboxy-lyase (498 aa).

Asparagine 175 lines the Mn(2+) pocket. Prenylated FMN is bound by residues 178 to 180 (IYR), 192 to 194 (RWL), and 197 to 198 (RG). Glutamate 241 serves as a coordination point for Mn(2+). Aspartate 290 functions as the Proton donor in the catalytic mechanism.

This sequence belongs to the UbiD family. As to quaternary structure, homohexamer. Prenylated FMN is required as a cofactor. Mn(2+) serves as cofactor.

Its subcellular location is the cell membrane. The enzyme catalyses a 4-hydroxy-3-(all-trans-polyprenyl)benzoate + H(+) = a 2-(all-trans-polyprenyl)phenol + CO2. It participates in cofactor biosynthesis; ubiquinone biosynthesis. Functionally, catalyzes the decarboxylation of 3-octaprenyl-4-hydroxy benzoate to 2-octaprenylphenol, an intermediate step in ubiquinone biosynthesis. The chain is 3-octaprenyl-4-hydroxybenzoate carboxy-lyase from Pectobacterium atrosepticum (strain SCRI 1043 / ATCC BAA-672) (Erwinia carotovora subsp. atroseptica).